The sequence spans 202 residues: Holliday junction resolvase RecU (202 aa).

Mg(2+) is bound by residues Thr-85, Asp-87, Glu-100, and Gln-119.

It belongs to the RecU family. Mg(2+) is required as a cofactor.

It localises to the cytoplasm. The enzyme catalyses Endonucleolytic cleavage at a junction such as a reciprocal single-stranded crossover between two homologous DNA duplexes (Holliday junction).. Endonuclease that resolves Holliday junction intermediates in genetic recombination. Cleaves mobile four-strand junctions by introducing symmetrical nicks in paired strands. Promotes annealing of linear ssDNA with homologous dsDNA. Required for DNA repair, homologous recombination and chromosome segregation. In Streptococcus pyogenes serotype M6 (strain ATCC BAA-946 / MGAS10394), this protein is Holliday junction resolvase RecU.